Consider the following 542-residue polypeptide: CTP synthase (542 aa).

The tract at residues 1-265 is amidoligase domain; that stretch reads MTRYIFVTGG…DDFVVERFGL (265 aa). Ser13 contacts CTP. Ser13 lines the UTP pocket. Residues 14–19 and Asp71 contribute to the ATP site; that span reads SLGKGI. Asp71 and Glu139 together coordinate Mg(2+). CTP is bound by residues 146–148, 186–191, and Lys222; these read DIE and KTKPTQ. UTP-binding positions include 186–191 and Lys222; that span reads KTKPTQ. The Glutamine amidotransferase type-1 domain occupies 290–541; the sequence is TIAMVGKYME…VKAALAQKNK (252 aa). Residue Gly351 participates in L-glutamine binding. Residue Cys378 is the Nucleophile; for glutamine hydrolysis of the active site. L-glutamine-binding positions include 379-382, Glu402, and Arg469; that span reads LGMQ. Active-site residues include His514 and Glu516.

The protein belongs to the CTP synthase family. Homotetramer.

It carries out the reaction UTP + L-glutamine + ATP + H2O = CTP + L-glutamate + ADP + phosphate + 2 H(+). The catalysed reaction is L-glutamine + H2O = L-glutamate + NH4(+). It catalyses the reaction UTP + NH4(+) + ATP = CTP + ADP + phosphate + 2 H(+). It participates in pyrimidine metabolism; CTP biosynthesis via de novo pathway; CTP from UDP: step 2/2. Its activity is regulated as follows. Allosterically activated by GTP, when glutamine is the substrate; GTP has no effect on the reaction when ammonia is the substrate. The allosteric effector GTP functions by stabilizing the protein conformation that binds the tetrahedral intermediate(s) formed during glutamine hydrolysis. Inhibited by the product CTP, via allosteric rather than competitive inhibition. In terms of biological role, catalyzes the ATP-dependent amination of UTP to CTP with either L-glutamine or ammonia as the source of nitrogen. Regulates intracellular CTP levels through interactions with the four ribonucleotide triphosphates. In Pseudomonas putida (strain GB-1), this protein is CTP synthase.